A 233-amino-acid chain; its full sequence is Large ribosomal subunit protein uL1 (233 aa).

The protein belongs to the universal ribosomal protein uL1 family. As to quaternary structure, part of the 50S ribosomal subunit.

In terms of biological role, binds directly to 23S rRNA. The L1 stalk is quite mobile in the ribosome, and is involved in E site tRNA release. Its function is as follows. Protein L1 is also a translational repressor protein, it controls the translation of the L11 operon by binding to its mRNA. The protein is Large ribosomal subunit protein uL1 of Vibrio cholerae serotype O1 (strain ATCC 39315 / El Tor Inaba N16961).